We begin with the raw amino-acid sequence, 166 residues long: Lipoprotein signal peptidase (166 aa).

4 helical membrane-spanning segments follow: residues 9–29, 45–65, 71–91, and 100–120; these read ASGA…FDQL, ALTS…FGFL, WQRW…CFLL, and FSVS…DRLV. Residues aspartate 126 and aspartate 144 contribute to the active site. The chain crosses the membrane as a helical span at residues 135-155; it reads WHFPAFNLADSAITIGAVLLI.

It belongs to the peptidase A8 family.

The protein resides in the cell inner membrane. It carries out the reaction Release of signal peptides from bacterial membrane prolipoproteins. Hydrolyzes -Xaa-Yaa-Zaa-|-(S,diacylglyceryl)Cys-, in which Xaa is hydrophobic (preferably Leu), and Yaa (Ala or Ser) and Zaa (Gly or Ala) have small, neutral side chains.. Its pathway is protein modification; lipoprotein biosynthesis (signal peptide cleavage). This protein specifically catalyzes the removal of signal peptides from prolipoproteins. The chain is Lipoprotein signal peptidase from Burkholderia cenocepacia (strain ATCC BAA-245 / DSM 16553 / LMG 16656 / NCTC 13227 / J2315 / CF5610) (Burkholderia cepacia (strain J2315)).